The primary structure comprises 1223 residues: DNA-directed RNA polymerase subunit beta' (1223 aa).

The Zn(2+) site is built by cysteine 60, cysteine 62, cysteine 75, and cysteine 78. Mg(2+) contacts are provided by aspartate 449, aspartate 451, and aspartate 453. Zn(2+)-binding residues include cysteine 818, cysteine 892, cysteine 899, and cysteine 902.

The protein belongs to the RNA polymerase beta' chain family. In terms of assembly, the RNAP catalytic core consists of 2 alpha, 1 beta, 1 beta' and 1 omega subunit. When a sigma factor is associated with the core the holoenzyme is formed, which can initiate transcription. It depends on Mg(2+) as a cofactor. Requires Zn(2+) as cofactor.

The enzyme catalyses RNA(n) + a ribonucleoside 5'-triphosphate = RNA(n+1) + diphosphate. Its function is as follows. DNA-dependent RNA polymerase catalyzes the transcription of DNA into RNA using the four ribonucleoside triphosphates as substrates. This Lactobacillus gasseri (strain ATCC 33323 / DSM 20243 / BCRC 14619 / CIP 102991 / JCM 1131 / KCTC 3163 / NCIMB 11718 / NCTC 13722 / AM63) protein is DNA-directed RNA polymerase subunit beta'.